We begin with the raw amino-acid sequence, 183 residues long: Peptidyl-tRNA hydrolase (183 aa).

Position 14 (Tyr14) interacts with tRNA. Catalysis depends on His19, which acts as the Proton acceptor. Positions 60 and 62 each coordinate tRNA.

Belongs to the PTH family. Monomer.

Its subcellular location is the cytoplasm. It catalyses the reaction an N-acyl-L-alpha-aminoacyl-tRNA + H2O = an N-acyl-L-amino acid + a tRNA + H(+). Functionally, hydrolyzes ribosome-free peptidyl-tRNAs (with 1 or more amino acids incorporated), which drop off the ribosome during protein synthesis, or as a result of ribosome stalling. In terms of biological role, catalyzes the release of premature peptidyl moieties from peptidyl-tRNA molecules trapped in stalled 50S ribosomal subunits, and thus maintains levels of free tRNAs and 50S ribosomes. This Mycoplasmoides gallisepticum (strain R(low / passage 15 / clone 2)) (Mycoplasma gallisepticum) protein is Peptidyl-tRNA hydrolase.